The chain runs to 691 residues: DNA ligase (691 aa).

NAD(+)-binding positions include 41–45 (DAEYD), 90–91 (SL), and glutamate 130. The active-site N6-AMP-lysine intermediate is the lysine 132. The NAD(+) site is built by arginine 153, glutamate 190, lysine 307, and lysine 331. Cysteine 425, cysteine 428, cysteine 443, and cysteine 449 together coordinate Zn(2+). The BRCT domain maps to 610–691 (APQGVLAGKT…MHTLLEGHAR (82 aa)).

The protein belongs to the NAD-dependent DNA ligase family. LigA subfamily. Requires Mg(2+) as cofactor. Mn(2+) serves as cofactor.

It catalyses the reaction NAD(+) + (deoxyribonucleotide)n-3'-hydroxyl + 5'-phospho-(deoxyribonucleotide)m = (deoxyribonucleotide)n+m + AMP + beta-nicotinamide D-nucleotide.. In terms of biological role, DNA ligase that catalyzes the formation of phosphodiester linkages between 5'-phosphoryl and 3'-hydroxyl groups in double-stranded DNA using NAD as a coenzyme and as the energy source for the reaction. It is essential for DNA replication and repair of damaged DNA. The polypeptide is DNA ligase (Burkholderia mallei (strain NCTC 10247)).